We begin with the raw amino-acid sequence, 366 residues long: Histidinol-phosphate aminotransferase 2 (366 aa).

A compositionally biased stretch (polar residues) spans 1–11 (MQVKDQLSSLQ). The segment at 1-21 (MQVKDQLSSLQPYKPGKSPEQ) is disordered. Residue Lys222 is modified to N6-(pyridoxal phosphate)lysine.

The protein belongs to the class-II pyridoxal-phosphate-dependent aminotransferase family. Histidinol-phosphate aminotransferase subfamily. Homodimer. Requires pyridoxal 5'-phosphate as cofactor.

The catalysed reaction is L-histidinol phosphate + 2-oxoglutarate = 3-(imidazol-4-yl)-2-oxopropyl phosphate + L-glutamate. The protein operates within amino-acid biosynthesis; L-histidine biosynthesis; L-histidine from 5-phospho-alpha-D-ribose 1-diphosphate: step 7/9. This is Histidinol-phosphate aminotransferase 2 (hisC2) from Bacillus cereus (strain ATCC 14579 / DSM 31 / CCUG 7414 / JCM 2152 / NBRC 15305 / NCIMB 9373 / NCTC 2599 / NRRL B-3711).